We begin with the raw amino-acid sequence, 131 residues long: Mediator of RNA polymerase II transcription subunit 31 (131 aa).

An N-acetylalanine modification is found at A2.

This sequence belongs to the Mediator complex subunit 31 family. Component of the Mediator complex, which is composed of MED1, MED4, MED6, MED7, MED8, MED9, MED10, MED11, MED12, MED13, MED13L, MED14, MED15, MED16, MED17, MED18, MED19, MED20, MED21, MED22, MED23, MED24, MED25, MED26, MED27, MED29, MED30, MED31, CCNC, CDK8 and CDC2L6/CDK11. The MED12, MED13, CCNC and CDK8 subunits form a distinct module termed the CDK8 module. Mediator containing the CDK8 module is less active than Mediator lacking this module in supporting transcriptional activation. Individual preparations of the Mediator complex lacking one or more distinct subunits have been variously termed ARC, CRSP, DRIP, PC2, SMCC and TRAP.

It is found in the nucleus. Its function is as follows. Component of the Mediator complex, a coactivator involved in the regulated transcription of nearly all RNA polymerase II-dependent genes. Mediator functions as a bridge to convey information from gene-specific regulatory proteins to the basal RNA polymerase II transcription machinery. Mediator is recruited to promoters by direct interactions with regulatory proteins and serves as a scaffold for the assembly of a functional preinitiation complex with RNA polymerase II and the general transcription factors. The protein is Mediator of RNA polymerase II transcription subunit 31 (MED31) of Homo sapiens (Human).